The sequence spans 185 residues: Ribosome-recycling factor (185 aa).

This sequence belongs to the RRF family.

The protein localises to the cytoplasm. Its function is as follows. Responsible for the release of ribosomes from messenger RNA at the termination of protein biosynthesis. May increase the efficiency of translation by recycling ribosomes from one round of translation to another. The chain is Ribosome-recycling factor from Campylobacter jejuni subsp. jejuni serotype O:2 (strain ATCC 700819 / NCTC 11168).